The primary structure comprises 291 residues: Probable cell wall amidase LytH (291 aa).

Positions 1–40 (MKKIDSWLTKHGLKNRLTLVVIVIFIIFLILLFMFVNLSD) are cleaved as a signal peptide. The SH3b domain occupies 41 to 105 (EDTGQITITE…WVAGWHTNLN (65 aa)). Residues 122–286 (IVLDPGHGGS…VEQAIVDGLK (165 aa)) enclose the MurNAc-LAA domain. Positions 123–147 (VLDPGHGGSDQGASSSTPSKSLEKN) are disordered. Residues 133-142 (QGASSSTPSK) are compositionally biased toward polar residues.

This sequence belongs to the N-acetylmuramoyl-L-alanine amidase 3 family.

It localises to the secreted. Functionally, probably involved in cell-wall metabolism. The sequence is that of Probable cell wall amidase LytH (lytH) from Staphylococcus epidermidis (strain ATCC 35984 / DSM 28319 / BCRC 17069 / CCUG 31568 / BM 3577 / RP62A).